Consider the following 97-residue polypeptide: MQKSEGFRSGTRYKLKKHPRAKGLYPITRALKQFENGQTVHVILDPSVQKGMPHPKFHGKTGKIIGQRGSSFIVEVKDGHATKEIIARPQHLRECKN.

Belongs to the eukaryotic ribosomal protein eL21 family.

In Methanococcus aeolicus (strain ATCC BAA-1280 / DSM 17508 / OCM 812 / Nankai-3), this protein is Large ribosomal subunit protein eL21.